Reading from the N-terminus, the 176-residue chain is Shikimate kinase (176 aa).

12-17 (GSGKST) serves as a coordination point for ATP. Ser-16 is a Mg(2+) binding site. Residues Asp-34, Arg-58, and Gly-80 each contribute to the substrate site. Arg-117 provides a ligand contact to ATP. Arg-136 is a substrate binding site. Arg-153 is an ATP binding site.

This sequence belongs to the shikimate kinase family. In terms of assembly, monomer. Mg(2+) serves as cofactor.

It is found in the cytoplasm. The enzyme catalyses shikimate + ATP = 3-phosphoshikimate + ADP + H(+). It participates in metabolic intermediate biosynthesis; chorismate biosynthesis; chorismate from D-erythrose 4-phosphate and phosphoenolpyruvate: step 5/7. In terms of biological role, catalyzes the specific phosphorylation of the 3-hydroxyl group of shikimic acid using ATP as a cosubstrate. This Mycobacterium avium (strain 104) protein is Shikimate kinase.